The sequence spans 247 residues: uncharacterized protein (247 aa).

Positions 11 to 85 (GMSIGAVLDL…LKVIRAQLDA (75 aa)) constitute an HTH merR-type domain. The segment at residues 14-38 (IGAVLDLLRPDFPDVTISKIRFLEA) is a DNA-binding region (H-T-H motif).

As to quaternary structure, homodimer.

Transcriptional regulator that binds to its own promoter and thus may play a role in the regulation of the cotranscribed genes Rv1827 and Rv1828. Can also bind several promoter regions of genes that are essential, including ftsZ. Binds to the imperfect everted repeat sequence CTCAA through its winged-HTH motif. This is an uncharacterized protein from Mycobacterium tuberculosis (strain ATCC 25618 / H37Rv).